Consider the following 153-residue polypeptide: SKP1-like protein 9 (153 aa).

Residues 95-153 (IKAANYLNIKSLFDLACQTVAEIIKGNTPEQIREFFNIENDLTPEEEAAIRRENKWAFE) form an interaction with the F-box domain of F-box proteins region.

It belongs to the SKP1 family. Part of a SCF (SKP1-cullin-F-box) protein ligase complex. Interacts with CPR1/CPR30 and At3g61590. Expressed in leaves, shoot apical meristem (SAM), roots, flowers and pollen.

The protein resides in the nucleus. Its pathway is protein modification; protein ubiquitination. Functionally, involved in ubiquitination and subsequent proteasomal degradation of target proteins. Together with CUL1, RBX1 and a F-box protein, it forms a SCF E3 ubiquitin ligase complex. The functional specificity of this complex depends on the type of F-box protein. In the SCF complex, it serves as an adapter that links the F-box protein to CUL1. In Arabidopsis thaliana (Mouse-ear cress), this protein is SKP1-like protein 9 (ASK9).